The sequence spans 652 residues: Type III restriction-modification enzyme StyLTI Mod subunit (652 aa).

The binding of S-adenosyl methionine stretch occupies residues 135–138 (DPPY).

It belongs to the N(4)/N(6)-methyltransferase family. In terms of assembly, homodimer, also forms a functional restriction-competent complex with Res.

The catalysed reaction is a 2'-deoxyadenosine in DNA + S-adenosyl-L-methionine = an N(6)-methyl-2'-deoxyadenosine in DNA + S-adenosyl-L-homocysteine + H(+). A beta subtype methylase that binds the system-specific DNA recognition site 5'-CAGAG-3' and methylates A-4 (of only 1 strand as the other does not have an A residue). DNA restriction requires both the Res and Mod subunits. This is Type III restriction-modification enzyme StyLTI Mod subunit from Salmonella typhimurium (strain LT2 / SGSC1412 / ATCC 700720).